The chain runs to 134 residues: Lymphocyte antigen 6G (134 aa).

Residues 1-26 (MDTCHIAKSCVLILLVVLLCAERAQG) form the signal peptide. Residues 27-118 (LECYNCIGVP…PTGGSSWTMA (92 aa)) enclose the UPAR/Ly6 domain. 5 disulfide bridges follow: Cys29–Cys53, Cys32–Cys41, Cys46–Cys74, Cys78–Cys98, and Cys99–Cys104. Asn105 is lipidated: GPI-anchor amidated asparagine. Residues 106–134 (AAVPTGGSSWTMAGVLLFSLVSVLLQTFL) constitute a propeptide, removed in mature form.

As to expression, expressed in bone marrow.

Its subcellular location is the cell membrane. The polypeptide is Lymphocyte antigen 6G (Ly6g) (Mus musculus (Mouse)).